The primary structure comprises 231 residues: Cytidylate kinase (231 aa).

12–20 (GPSGAGKGT) serves as a coordination point for ATP.

Belongs to the cytidylate kinase family. Type 1 subfamily.

Its subcellular location is the cytoplasm. It catalyses the reaction CMP + ATP = CDP + ADP. The enzyme catalyses dCMP + ATP = dCDP + ADP. The polypeptide is Cytidylate kinase (Shewanella amazonensis (strain ATCC BAA-1098 / SB2B)).